The following is a 570-amino-acid chain: Probable D-xylulose kinase A (570 aa).

Residues histidine 98, aspartate 279, and asparagine 280 each coordinate substrate. ATP is bound by residues tryptophan 363, 470–471, and asparagine 474; that span reads GG.

This sequence belongs to the FGGY kinase family.

It is found in the cytoplasm. It carries out the reaction D-xylulose + ATP = D-xylulose 5-phosphate + ADP + H(+). In terms of biological role, highly specific D-xylulose kinase which participates in the catabolism of xylose. Xylose is a major component of hemicelluloses such as xylan. Most fungi utilize D-xylose via three enzymatic reactions, xylose reductase (XR), xylitol dehydrogenase (XDH), and xylulokinase, to form xylulose 5-phosphate, which enters pentose phosphate pathway. The protein is Probable D-xylulose kinase A (xkiA) of Arthroderma otae (strain ATCC MYA-4605 / CBS 113480) (Microsporum canis).